The following is a 101-amino-acid chain: ATP-dependent Clp protease adapter protein ClpS 2 (101 aa).

Belongs to the ClpS family. In terms of assembly, binds to the N-terminal domain of the chaperone ClpA.

Its function is as follows. Involved in the modulation of the specificity of the ClpAP-mediated ATP-dependent protein degradation. The polypeptide is ATP-dependent Clp protease adapter protein ClpS 2 (Mesorhizobium japonicum (strain LMG 29417 / CECT 9101 / MAFF 303099) (Mesorhizobium loti (strain MAFF 303099))).